Reading from the N-terminus, the 161-residue chain is DNA-directed RNA polymerase 18 kDa subunit (161 aa).

The protein belongs to the poxviridae DNA-directed RNA polymerase 18 kDa subunit family. As to quaternary structure, the DNA-dependent RNA polymerase used for intermediate and late genes expression consists of eight subunits Rpo30/OPG66, Rpo7/OPG90, Rpo22/OPG103, Rpo147/OPG105, Rpo18/OPG119, Rpo19/OPG131, Rpo132/OPG151 and Rpo35/OPG156. The same holoenzyme, with the addition of the transcription-specificity factor OPG109, is used for early gene expression.

It localises to the virion. The enzyme catalyses RNA(n) + a ribonucleoside 5'-triphosphate = RNA(n+1) + diphosphate. Its function is as follows. Part of the DNA-dependent RNA polymerase which catalyzes the transcription of viral DNA into RNA using the four ribonucleoside triphosphates as substrates. Responsible for the transcription of early, intermediate and late genes. DNA-dependent RNA polymerase associates with the early transcription factor (ETF), itself composed of OPG118 and OPG133, thereby allowing the early genes transcription. Late transcription, and probably also intermediate transcription, require newly synthesized RNA polymerase. The chain is DNA-directed RNA polymerase 18 kDa subunit (OPG119) from Vaccinia virus (strain Copenhagen) (VACV).